Consider the following 170-residue polypeptide: Protein-export protein SecB (170 aa).

Belongs to the SecB family. Homotetramer, a dimer of dimers. One homotetramer interacts with 1 SecA dimer.

It is found in the cytoplasm. One of the proteins required for the normal export of preproteins out of the cell cytoplasm. It is a molecular chaperone that binds to a subset of precursor proteins, maintaining them in a translocation-competent state. It also specifically binds to its receptor SecA. The chain is Protein-export protein SecB from Xanthomonas campestris pv. campestris (strain 8004).